The sequence spans 150 residues: Putative esterase VC_A0580 (150 aa).

The protein belongs to the thioesterase PaaI family.

This chain is Putative esterase VC_A0580, found in Vibrio cholerae serotype O1 (strain ATCC 39315 / El Tor Inaba N16961).